The sequence spans 600 residues: Aspartate--tRNA(Asp/Asn) ligase (600 aa).

Residue Glu181 participates in L-aspartate binding. An aspartate region spans residues 205 to 208; it reads QQFK. Residue Arg227 coordinates L-aspartate. Residues 227-229 and Gln236 contribute to the ATP site; that span reads RDE. Position 455 (His455) interacts with L-aspartate. Glu489 lines the ATP pocket. Position 496 (Arg496) interacts with L-aspartate. 541 to 544 is an ATP binding site; that stretch reads GIDR.

It belongs to the class-II aminoacyl-tRNA synthetase family. Type 1 subfamily. As to quaternary structure, homodimer.

The protein resides in the cytoplasm. It carries out the reaction tRNA(Asx) + L-aspartate + ATP = L-aspartyl-tRNA(Asx) + AMP + diphosphate. Functionally, aspartyl-tRNA synthetase with relaxed tRNA specificity since it is able to aspartylate not only its cognate tRNA(Asp) but also tRNA(Asn). Reaction proceeds in two steps: L-aspartate is first activated by ATP to form Asp-AMP and then transferred to the acceptor end of tRNA(Asp/Asn). This Rubrobacter xylanophilus (strain DSM 9941 / JCM 11954 / NBRC 16129 / PRD-1) protein is Aspartate--tRNA(Asp/Asn) ligase.